The primary structure comprises 239 residues: tRNA (guanine-N(7)-)-methyltransferase (239 aa).

4 residues coordinate S-adenosyl-L-methionine: Glu-68, Glu-93, Asp-120, and Asp-143. The active site involves Asp-143. Residues Lys-147, Asp-180, and 217–220 contribute to the substrate site; that span reads TKFE.

This sequence belongs to the class I-like SAM-binding methyltransferase superfamily. TrmB family.

The catalysed reaction is guanosine(46) in tRNA + S-adenosyl-L-methionine = N(7)-methylguanosine(46) in tRNA + S-adenosyl-L-homocysteine. Its pathway is tRNA modification; N(7)-methylguanine-tRNA biosynthesis. Catalyzes the formation of N(7)-methylguanine at position 46 (m7G46) in tRNA. The polypeptide is tRNA (guanine-N(7)-)-methyltransferase (Vibrio vulnificus (strain CMCP6)).